A 419-amino-acid polypeptide reads, in one-letter code: Carboxypeptidase A1 (419 aa).

An N-terminal signal peptide occupies residues 1–16 (MKRLLVLSVLLAAVFG). The propeptide at 17-110 (NENFVGHQVL…KQQMSAFQAR (94 aa)) is activation peptide. The Peptidase M14 domain maps to 121–414 (TYHTLDEIYE…LALLTIMDHT (294 aa)). 2 residues coordinate Zn(2+): H179 and E182. Substrate-binding positions include 179–182 (HSRE), R237, and 254–255 (NR). The cysteines at positions 248 and 271 are disulfide-linked. Residue H306 participates in Zn(2+) binding. Residues 307-308 (SY) and Y358 contribute to the substrate site. E380 (proton donor/acceptor) is an active-site residue.

The protein belongs to the peptidase M14 family. In terms of assembly, monomer. Requires Zn(2+) as cofactor.

It is found in the secreted. It catalyses the reaction Release of a C-terminal amino acid, but little or no action with -Asp, -Glu, -Arg, -Lys or -Pro.. Carboxypeptidase that catalyzes the release of a C-terminal amino acid, but has little or no action with -Asp, -Glu, -Arg, -Lys or -Pro. This Mus musculus (Mouse) protein is Carboxypeptidase A1 (Cpa1).